Reading from the N-terminus, the 456-residue chain is 26S proteasome non-ATPase regulatory subunit 12 (456 aa).

Alanine 2 bears the N-acetylalanine mark. Residue lysine 92 forms a Glycyl lysine isopeptide (Lys-Gly) (interchain with G-Cter in SUMO1); alternate linkage. Lysine 92 participates in a covalent cross-link: Glycyl lysine isopeptide (Lys-Gly) (interchain with G-Cter in SUMO2); alternate. 2 positions are modified to N6-acetyllysine: lysine 221 and lysine 368. The PCI domain maps to 242-420 (SICKHYRAIY…GIINFQRPKD (179 aa)).

Belongs to the proteasome subunit p55 family. As to quaternary structure, component of the 19S proteasome regulatory particle complex. The 26S proteasome consists of a 20S core particle (CP) and two 19S regulatory subunits (RP). The regulatory particle is made of a lid composed of 9 subunits including PSMD12, a base containing 6 ATPases and few additional components. Interacts with ERCC6.

Its function is as follows. Component of the 26S proteasome, a multiprotein complex involved in the ATP-dependent degradation of ubiquitinated proteins. This complex plays a key role in the maintenance of protein homeostasis by removing misfolded or damaged proteins, which could impair cellular functions, and by removing proteins whose functions are no longer required. Therefore, the proteasome participates in numerous cellular processes, including cell cycle progression, apoptosis, or DNA damage repair. The chain is 26S proteasome non-ATPase regulatory subunit 12 (PSMD12) from Bos taurus (Bovine).